We begin with the raw amino-acid sequence, 333 residues long: Protein RecA (333 aa).

Position 69–76 (69–76 (GPESSGKT)) interacts with ATP.

This sequence belongs to the RecA family.

It is found in the cytoplasm. Its function is as follows. Can catalyze the hydrolysis of ATP in the presence of single-stranded DNA, the ATP-dependent uptake of single-stranded DNA by duplex DNA, and the ATP-dependent hybridization of homologous single-stranded DNAs. It interacts with LexA causing its activation and leading to its autocatalytic cleavage. This chain is Protein RecA, found in Mesoplasma florum (strain ATCC 33453 / NBRC 100688 / NCTC 11704 / L1) (Acholeplasma florum).